The following is a 959-amino-acid chain: Transcription factor 1 (959 aa).

2 consecutive C2H2-type zinc fingers follow at residues 2 to 24 (VFCT…ILTH) and 30 to 52 (FKCF…YTVH). Positions 79 to 105 (CSNCAKTKTKCDKKFPCSRCASRNLRC) form a DNA-binding region, zn(2)-C6 fungal-type. Positions 154–226 (PTGHVEESSK…SFPGFDDYNQ (73 aa)) are disordered. Low complexity predominate over residues 163–178 (KSSSPSGSPTSISHNS).

It is found in the nucleus. Its function is as follows. Elsinochromes biosynthesis cluster-specific transcription factor that positively regulates the expression of cluster genes including RDT1, PKS1, PRF1 and HP1, and subsequent elsinochromes production. This Elsinoe fawcettii (Citrus scab fungus) protein is Transcription factor 1.